Reading from the N-terminus, the 467-residue chain is Gamma-aminobutyric acid receptor subunit gamma-3 (467 aa).

Positions 1-17 (MAAKLLLLLCLFSGLHA) are cleaved as a signal peptide. The Extracellular segment spans residues 18–256 (RSRRVEEDDS…FELSRRMGYF (239 aa)). Asn-110 is a glycosylation site (N-linked (GlcNAc...) asparagine). An intrachain disulfide couples Cys-171 to Cys-185. N-linked (GlcNAc...) asparagine glycosylation occurs at Asn-228. A helical transmembrane segment spans residues 257 to 277 (TIQTYIPCILTVVLSWVSFWI). At 278 to 283 (KKDATP) the chain is on the cytoplasmic side. A helical transmembrane segment spans residues 284–303 (ARTTLGITTVLTMTTLSTIA). Topologically, residues 304-311 (RKSLPRVS) are extracellular. The chain crosses the membrane as a helical span at residues 312-332 (YVTAMDLFVTVCFLFVFAALM). The Cytoplasmic segment spans residues 333–446 (EYATLNYYSS…DVSELDSYSR (114 aa)). A helical transmembrane segment spans residues 447–467 (VFFPTSFLLFNLVYWVGYLYL).

It belongs to the ligand-gated ion channel (TC 1.A.9) family. Gamma-aminobutyric acid receptor (TC 1.A.9.5) subfamily. GABRG3 sub-subfamily. Heteropentamer, formed by a combination of alpha (GABRA1-6), beta (GABRB1-3), gamma (GABRG1-3), delta (GABRD), epsilon (GABRE), rho (GABRR1-3), pi (GABRP) and theta (GABRQ) chains, each subunit exhibiting distinct physiological and pharmacological properties. Post-translationally, may be palmitoylated. Expressed in brain.

The protein resides in the postsynaptic cell membrane. Its subcellular location is the cell membrane. The enzyme catalyses chloride(in) = chloride(out). Allosterically potentiated by alphaxalone. Allosterically inhibited by pregnenolone sulfate. Inhibited by zinc and lanthanum. Functionally, gamma subunit of the heteropentameric ligand-gated chloride channel gated by gamma-aminobutyric acid (GABA), a major inhibitory neurotransmitter in the brain. GABA-gated chloride channels, also named GABA(A) receptors (GABAAR), consist of five subunits arranged around a central pore and contain GABA active binding site(s) located at the alpha and beta subunit interface(s). When activated by GABA, GABAARs selectively allow the flow of chloride across the cell membrane down their electrochemical gradient. The polypeptide is Gamma-aminobutyric acid receptor subunit gamma-3 (Rattus norvegicus (Rat)).